The primary structure comprises 524 residues: Excitatory amino acid transporter 3 (524 aa).

Residues 1–18 lie on the Cytoplasmic side of the membrane; the sequence is MGKPARKGCEWKRFLKNN. Residues 19–38 traverse the membrane as a helical segment; it reads WVLLSTVAAVVLGITTGVLV. Over 39–61 the chain is Extracellular; the sequence is REHSNLSTLEKFYFAFPGEILMR. N43 is a glycosylation site (N-linked (GlcNAc...) asparagine). The chain crosses the membrane as a helical span at residues 62–82; sequence MLKLIILPLIISSMITGVAAL. Over 83-93 the chain is Cytoplasmic; it reads DSNVSGKIGLR. The helical transmembrane segment at 94 to 114 threads the bilayer; it reads AVVYYFCTTLIAVILGIVLVV. Na(+) is bound by residues Y98, T101, and T102. The Extracellular segment spans residues 115-205; that stretch reads SIKPGVTQKV…KTKEYKIVGM (91 aa). 2 N-linked (GlcNAc...) asparagine glycosylation sites follow: N178 and N195. A helical transmembrane segment spans residues 206 to 229; the sequence is YSDGINVLGLIVFCLVFGLVIGKM. The Cytoplasmic segment spans residues 230–238; that stretch reads GEKGQILVD. The chain crosses the membrane as a helical span at residues 239-266; it reads FFNALSDATMKIVQIIMCYMPLGILFLI. Residues 267–286 are Extracellular-facing; that stretch reads AGKIIEVEDWEIFRKLGLYM. A helical transmembrane segment spans residues 287–308; sequence ATVLTGLAIHSIVILPLIYFIV. At 309–313 the chain is on the cytoplasmic side; it reads VRKNP. The discontinuously helical intramembrane region spans 314–344; the sequence is FRFAMGMAQALLTALMISSSSATLPVTFRCA. Positions 331 and 333 each coordinate L-aspartate. Residues 345 to 353 are Cytoplasmic-facing; sequence EENNQVDKR. Residues 354-380 traverse the membrane as a helical segment; that stretch reads ITRFVLPVGATINMDGTALYEAVAAVF. The Na(+) site is built by G362, T364, N366, and D368. An L-aspartate-binding site is contributed by T370. Residues 381–393 lie on the Extracellular side of the membrane; the sequence is IAQLNDLDLGIGQ. Positions 394-427 form an intramembrane region, discontinuously helical; that stretch reads IITISITATSASIGAAGVPQAGLVTMVIVLSAVG. Na(+) contacts are provided by S405, I406, and A408. V411 lines the L-aspartate pocket. Topologically, residues 428–440 are extracellular; the sequence is LPAEDVTLIIAVD. The helical transmembrane segment at 441 to 462 threads the bilayer; that stretch reads WLLDRFRTMVNVLGDAFGTGIV. L-aspartate is bound by residues R447, T448, and N451. Na(+)-binding residues include N451 and D455. Over 463 to 524 the chain is Cytoplasmic; it reads EKLSKKELEQ…TISFTQTSQF (62 aa). A phosphoserine mark is found at S517 and S522.

It belongs to the dicarboxylate/amino acid:cation symporter (DAACS) (TC 2.A.23) family. SLC1A1 subfamily. Homotrimer. Interacts with ARL6IP5. Interacts with RTN2 (via N-terminus); the interaction promotes cell surface expression of SLC1A1. Interacts with SORCS2; this interaction is important for normal expression at the cell membrane. In terms of processing, glycosylated. Expressed in all tissues tested including liver, muscle, testis, ovary, retinoblastoma cell line, neurons and brain (in which there was dense expression in substantia nigra, red nucleus, hippocampus and in cerebral cortical layers).

It is found in the cell membrane. Its subcellular location is the apical cell membrane. The protein localises to the synapse. It localises to the synaptosome. The protein resides in the early endosome membrane. It is found in the late endosome membrane. Its subcellular location is the recycling endosome membrane. It catalyses the reaction K(+)(in) + L-glutamate(out) + 3 Na(+)(out) + H(+)(out) = K(+)(out) + L-glutamate(in) + 3 Na(+)(in) + H(+)(in). It carries out the reaction K(+)(in) + L-aspartate(out) + 3 Na(+)(out) + H(+)(out) = K(+)(out) + L-aspartate(in) + 3 Na(+)(in) + H(+)(in). The catalysed reaction is D-aspartate(out) + K(+)(in) + 3 Na(+)(out) + H(+)(out) = D-aspartate(in) + K(+)(out) + 3 Na(+)(in) + H(+)(in). The enzyme catalyses K(+)(in) + L-cysteine(out) + 3 Na(+)(out) + H(+)(out) = K(+)(out) + L-cysteine(in) + 3 Na(+)(in) + H(+)(in). Sodium-dependent, high-affinity amino acid transporter that mediates the uptake of L-glutamate and also L-aspartate and D-aspartate. Can also transport L-cysteine. Functions as a symporter that transports one amino acid molecule together with two or three Na(+) ions and one proton, in parallel with the counter-transport of one K(+) ion. Mediates Cl(-) flux that is not coupled to amino acid transport; this avoids the accumulation of negative charges due to aspartate and Na(+) symport. Plays an important role in L-glutamate and L-aspartate reabsorption in renal tubuli. Plays a redundant role in the rapid removal of released glutamate from the synaptic cleft, which is essential for terminating the postsynaptic action of glutamate. Contributes to glutathione biosynthesis and protection against oxidative stress via its role in L-glutamate and L-cysteine transport. Negatively regulated by ARL6IP5. This is Excitatory amino acid transporter 3 from Homo sapiens (Human).